The sequence spans 141 residues: Hemoglobin subunit alpha-2 (141 aa).

Residues 1–141 enclose the Globin domain; the sequence is VLSPADKNNV…VSTVLTSKYR (141 aa). Position 58 (His58) interacts with O2. His87 contributes to the heme b binding site.

Belongs to the globin family. In terms of assembly, heterotetramer of two alpha chains and two beta chains. Red blood cells.

Involved in oxygen transport from the lung to the various peripheral tissues. The polypeptide is Hemoglobin subunit alpha-2 (Varecia variegata (Black-and-white ruffed lemur)).